The following is a 267-amino-acid chain: Ribosomal RNA small subunit methyltransferase A (267 aa).

5 residues coordinate S-adenosyl-L-methionine: Leu20, Gly45, Glu68, Asp91, and Asn113.

Belongs to the class I-like SAM-binding methyltransferase superfamily. rRNA adenine N(6)-methyltransferase family. RsmA subfamily.

The protein resides in the cytoplasm. It catalyses the reaction adenosine(1518)/adenosine(1519) in 16S rRNA + 4 S-adenosyl-L-methionine = N(6)-dimethyladenosine(1518)/N(6)-dimethyladenosine(1519) in 16S rRNA + 4 S-adenosyl-L-homocysteine + 4 H(+). Specifically dimethylates two adjacent adenosines (A1518 and A1519) in the loop of a conserved hairpin near the 3'-end of 16S rRNA in the 30S particle. May play a critical role in biogenesis of 30S subunits. The chain is Ribosomal RNA small subunit methyltransferase A from Blochmanniella pennsylvanica (strain BPEN).